A 264-amino-acid polypeptide reads, in one-letter code: Proteasome subunit alpha type-4 (264 aa).

The protein belongs to the peptidase T1A family. As to quaternary structure, the 26S proteasome consists of a 20S proteasome core and two 19S regulatory subunits. The 20S proteasome core is composed of 28 subunits that are arranged in four stacked rings, resulting in a barrel-shaped structure. The two end rings are each formed by seven alpha subunits, and the two central rings are each formed by seven beta subunits. The catalytic chamber with the active sites is on the inside of the barrel. Interacts with PI31.

Its subcellular location is the cytoplasm. It localises to the nucleus. In terms of biological role, the proteasome is a multicatalytic proteinase complex which is characterized by its ability to cleave peptides with Arg, Phe, Tyr, Leu, and Glu adjacent to the leaving group at neutral or slightly basic pH. The proteasome has an ATP-dependent proteolytic activity. This chain is Proteasome subunit alpha type-4 (Prosalpha3), found in Drosophila melanogaster (Fruit fly).